We begin with the raw amino-acid sequence, 508 residues long: Pentatricopeptide repeat-containing protein At5g48730, chloroplastic (508 aa).

Over residues 1–10 (MVSLSTSTSH) the composition is skewed to polar residues. The segment at 1–22 (MVSLSTSTSHAPPLPTNRRTAE) is disordered. The transit peptide at 1 to 28 (MVSLSTSTSHAPPLPTNRRTAERTFTVR) directs the protein to the chloroplast. PPR repeat units lie at residues 149-183 (NVGIYVKLIVMLGKCKQPEKAHELFQEMINEGCVV), 184-214 (NHEVYTALVSAYSRSGRFDAAFTLLERMKSS), 220-254 (DVHTYSILIKSFLQVFAFDKVQDLLSDMRRQGIRP), 255-290 (NTITYNTLIDAYGKAKMFVEMESTLIQMLGEDDCKP), 291-325 (DSWTMNSTLRAFGGNGQIEMMENCYEKFQSSGIEP), 326-360 (NIRTFNILLDSYGKSGNYKKMSAVMEYMQKYHYSW), 361-395 (TIVTYNVVIDAFGRAGDLKQMEYLFRLMQSERIFP), 396-430 (SCVTLCSLVRAYGRASKADKIGGVLRFIENSDIRL), 431-465 (DLVFFNCLVDAYGRMEKFAEMKGVLELMEKKGFKP), and 466-500 (DKITYRTMVKAYRISGMTTHVKELHGVVESVGEAQ).

The protein belongs to the PPR family. P subfamily.

It is found in the plastid. It localises to the chloroplast. The polypeptide is Pentatricopeptide repeat-containing protein At5g48730, chloroplastic (Arabidopsis thaliana (Mouse-ear cress)).